Here is a 121-residue protein sequence, read N- to C-terminus: Protein MGF 110-14L (121 aa).

Residues 1-17 (MKVLLGLLLGYSVLILA) form the signal peptide.

The protein belongs to the asfivirus MGF 110 family.

This is Protein MGF 110-14L from African swine fever virus (isolate Portugal/Lis 57/1957) (ASFV).